The primary structure comprises 244 residues: Tyrosine recombinase XerD-like (244 aa).

A Core-binding (CB) domain is found at 1 to 73 (MRDRISAFLE…ACNQFLYFLY (73 aa)). Residues 90 to 244 (AEKKTEKPEI…KTVLTLEKYR (155 aa)) enclose the Tyr recombinase domain. Catalysis depends on residues K150 and R211. The active-site O-(3'-phospho-DNA)-tyrosine intermediate is Y243.

The protein belongs to the 'phage' integrase family. XerD-like subfamily.

Its subcellular location is the cytoplasm. In terms of biological role, putative tyrosine recombinase. Not involved in the cutting and rejoining of the recombining DNA molecules on dif(SL) site. The sequence is that of Tyrosine recombinase XerD-like from Streptococcus pneumoniae (strain CGSP14).